A 123-amino-acid chain; its full sequence is Guanine nucleotide exchange factor MSS4 (123 aa).

Met1 carries the N-acetylmethionine modification. The MSS4 domain occupies Glu9–Glu123. Cys23, Cys26, Cys94, and Cys97 together coordinate Zn(2+).

Belongs to the DSS4/MSS4 family. In terms of assembly, interacts with RAB8A.

Guanine-nucleotide-releasing protein that acts on members of the SEC4/YPT1/RAB subfamily. Stimulates GDP release from both YPT1, RAB3A and RAB10, but is less active on these proteins than on the SEC4 protein. Might play a general role in vesicular transport. The protein is Guanine nucleotide exchange factor MSS4 of Mus musculus (Mouse).